Here is a 321-residue protein sequence, read N- to C-terminus: Chloroplastic calcium uniporter protein (321 aa).

Residues 1–56 constitute a chloroplast transit peptide; it reads MSSKKSLVQSLFNISKTYSRISGLTRMRPTKSGGIPPDAGDSGIRRRFLHKRAFFS. Helical transmembrane passes span 223–243 and 249–269; these read LWAGLGLIMAQTVGFFRLTFW and VMEPICFYVTSTYFMAGYAFF. The Selectivity filter motif lies at 247-255; the sequence is WDVMEPICF. Residue E251 participates in Ca(2+) binding.

This sequence belongs to the MCU (TC 1.A.77) family.

It localises to the plastid. The protein resides in the chloroplast membrane. It catalyses the reaction Ca(2+)(in) = Ca(2+)(out). Its function is as follows. Chloroplastic membrane calcium uniporter that mediates calcium uptake into chloroplast stroma. Constitutes a pore-forming and calcium-conducting subunit. Chloroplastic calcium homeostasis plays key roles in cellular physiology. Promotes calcium uptake into chloroplast stroma in response to osmotic-stress, fine-tuning cytosolic MAPK3/MAPK6 phosphorylation and affecting stomata opening. The polypeptide is Chloroplastic calcium uniporter protein (Arabidopsis thaliana (Mouse-ear cress)).